A 282-amino-acid polypeptide reads, in one-letter code: Acetylglutamate kinase (282 aa).

Residues 62–63, Arg-84, and Asn-178 contribute to the substrate site; that span reads GG.

The protein belongs to the acetylglutamate kinase family. ArgB subfamily.

It localises to the cytoplasm. It catalyses the reaction N-acetyl-L-glutamate + ATP = N-acetyl-L-glutamyl 5-phosphate + ADP. The protein operates within amino-acid biosynthesis; L-arginine biosynthesis; N(2)-acetyl-L-ornithine from L-glutamate: step 2/4. In terms of biological role, catalyzes the ATP-dependent phosphorylation of N-acetyl-L-glutamate. This Thermotoga petrophila (strain ATCC BAA-488 / DSM 13995 / JCM 10881 / RKU-1) protein is Acetylglutamate kinase.